The sequence spans 70 residues: MPHVKVKENEPFDVALRRFKRSIEKVGLLTELRAREFYEKPTAERKRKLAAAVKRQSKRLRSQQLPPKMY.

A compositionally biased stretch (basic residues) spans 48–61; sequence KLAAAVKRQSKRLR. The interval 48–70 is disordered; sequence KLAAAVKRQSKRLRSQQLPPKMY.

It belongs to the bacterial ribosomal protein bS21 family.

The sequence is that of Small ribosomal subunit protein bS21 from Thiobacillus denitrificans (strain ATCC 25259 / T1).